Reading from the N-terminus, the 364-residue chain is Peptide chain release factor 1 (364 aa).

Gln-238 bears the N5-methylglutamine mark.

The protein belongs to the prokaryotic/mitochondrial release factor family. Post-translationally, methylated by PrmC. Methylation increases the termination efficiency of RF1.

The protein resides in the cytoplasm. Functionally, peptide chain release factor 1 directs the termination of translation in response to the peptide chain termination codons UAG and UAA. This is Peptide chain release factor 1 from Psychrobacter sp. (strain PRwf-1).